The primary structure comprises 201 residues: uncharacterized protein (201 aa).

The next 4 membrane-spanning stretches (helical) occupy residues 9 to 29, 42 to 62, 86 to 106, and 126 to 146; these read YNVFLANLVLVFGFALNILVA, FLFVTPFLGVVIGAVLYFFDV, SGVIVFFLNVLIGVVLLVVMV, and LPYLWSTTGTSIVLSLISIGM. 2 stretches are compositionally biased toward basic and acidic residues: residues 165–174 and 182–191; these read EPTDPNKTDN and DENKKNEKEQ. The segment at 165-201 is disordered; it reads EPTDPNKTDNRAVVINLDENKKNEKEQSPPSAEMTSL. Polar residues predominate over residues 192-201; the sequence is SPPSAEMTSL.

The protein resides in the cell membrane. This is an uncharacterized protein from Mycoplasma genitalium (strain ATCC 33530 / DSM 19775 / NCTC 10195 / G37) (Mycoplasmoides genitalium).